The sequence spans 206 residues: tRNA(Phe) 7-((3-amino-3-carboxypropyl)-4-demethylwyosine(37)-N(4))-methyltransferase 2 (206 aa).

Belongs to the TYW3 family.

It carries out the reaction 4-demethyl-7-[(3S)-3-amino-3-carboxypropyl]wyosine(37) in tRNA(Phe) + S-adenosyl-L-methionine = 7-[(3S)-3-amino-3-carboxypropyl]wyosine(37) in tRNA(Phe) + S-adenosyl-L-homocysteine + H(+). S-adenosyl-L-methionine-dependent methyltransferase that acts as a component of the wyosine derivatives biosynthesis pathway. Probably methylates N-4 position of wybutosine-86 to produce wybutosine-72. This chain is tRNA(Phe) 7-((3-amino-3-carboxypropyl)-4-demethylwyosine(37)-N(4))-methyltransferase 2, found in Pyrococcus furiosus (strain ATCC 43587 / DSM 3638 / JCM 8422 / Vc1).